We begin with the raw amino-acid sequence, 79 residues long: DNA-directed RNA polymerase subunit omega (79 aa).

Belongs to the RNA polymerase subunit omega family. In terms of assembly, in cyanobacteria the RNAP catalytic core is composed of 2 alpha, 1 beta, 1 beta', 1 gamma and 1 omega subunit. When a sigma factor is associated with the core the holoenzyme is formed, which can initiate transcription.

It catalyses the reaction RNA(n) + a ribonucleoside 5'-triphosphate = RNA(n+1) + diphosphate. Its function is as follows. Promotes RNA polymerase assembly. Latches the N- and C-terminal regions of the beta' subunit thereby facilitating its interaction with the beta and alpha subunits. The protein is DNA-directed RNA polymerase subunit omega of Synechococcus sp. (strain JA-2-3B'a(2-13)) (Cyanobacteria bacterium Yellowstone B-Prime).